The sequence spans 343 residues: Sodium/bile acid cotransporter 7-A (343 aa).

The Cytoplasmic portion of the chain corresponds to 1-10 (MGLLERLRKE). Residues 11-31 (WFIVGIILVIAAAKLEPTVGV) form a helical membrane-spanning segment. The Extracellular portion of the chain corresponds to 32–37 (KGGPLK). The helical transmembrane segment at 38-58 (PEITITYIAVSAIFFNSGLSL) threads the bilayer. Residues 59–71 (KTEELTNALMHVK) are Cytoplasmic-facing. A helical transmembrane segment spans residues 72–92 (LHLFVQLFTLVFFPTAIWLFL). Residues 93 to 116 (QVLSLTPINEWLLKGLQTVSCMPP) lie on the Extracellular side of the membrane. The helical transmembrane segment at 117–137 (PVSSAVILTKAVGGNEAAAIF) threads the bilayer. Residue Asn-138 is a topological domain, cytoplasmic. The helical transmembrane segment at 139–159 (SAFGSFLGIVVTPLLLLLFLG) threads the bilayer. The Extracellular segment spans residues 160 to 163 (SSSS). Residues 164–184 (VPFTSIFSQLFMTVVVPLIIG) form a helical membrane-spanning segment. At 185–201 (QIVRRYIKDWLERKKPP) the chain is on the cytoplasmic side. The chain crosses the membrane as a helical span at residues 202-222 (FGAISSCVLLMIIYTTFCDTF). At 223 to 234 (SNPNIDLDTFSL) the chain is on the extracellular side. A helical transmembrane segment spans residues 235–255 (VVIVFIIFFIQLAFMLLTFLF). Over 256–270 (STSKNSGFTPADTVA) the chain is Cytoplasmic. A helical membrane pass occupies residues 271 to 291 (IVFCSTHKSLTLGIPMLKIVF). The Extracellular portion of the chain corresponds to 292 to 298 (VGYEHLS). The helical transmembrane segment at 299-319 (LISVPLLIYHPAQILLGSVLV) threads the bilayer. Over 320 to 343 (PTIKSWMLSRQKALKLTRQPKIPL) the chain is Cytoplasmic.

It belongs to the bile acid:sodium symporter (BASS) (TC 2.A.28) family. In terms of tissue distribution, strongly expressed in small intestine. Moderately expressed in spleen. Weakly expressed in skeletal muscle. Not detected in other tissues tested.

The protein localises to the cell membrane. It localises to the endoplasmic reticulum membrane. The protein resides in the golgi apparatus membrane. Functionally, involved in teeth and skeletal development. Has an essential role in the biosynthesis and trafficking of glycosaminoglycans and glycoproteins to produce a proper functioning extracellular matrix. Required for extracellular matrix mineralization. Also involved in the regulation of cellular calcium homeostasis. Does not show transport activity towards bile acids or steroid sulfates. The chain is Sodium/bile acid cotransporter 7-A (slc10a7-a) from Xenopus laevis (African clawed frog).